The sequence spans 187 residues: MSRIGKLPIKLPTTVEISHQSDATVQVINVKGKFGSLQRTLPEELKIEQIHNDNGSSLIVSFENQTRTNKSLQGLYRTLINNMVIGVTEQFVIILTLQGVGYRASVQGKSLVLNLGYSHPVEIDIPEGITVEVTQNTTLNIKACDKEQLGLFAAKVRAWRPPEPYKGKGILYKNEQILRKAGKSGKK.

This sequence belongs to the universal ribosomal protein uL6 family. Part of the 50S ribosomal subunit.

The protein localises to the plastid. It is found in the chloroplast. In terms of biological role, binds 23S rRNA. The polypeptide is Large ribosomal subunit protein uL6c (rpl6) (Thalassiosira pseudonana (Marine diatom)).